A 407-amino-acid chain; its full sequence is Putative replication protein A (407 aa).

Belongs to the ParA family.

The chain is Putative replication protein A from Sinorhizobium fredii (strain NBRC 101917 / NGR234).